A 309-amino-acid polypeptide reads, in one-letter code: Sulfate adenylyltransferase subunit 2 (309 aa).

It belongs to the PAPS reductase family. CysD subfamily. As to quaternary structure, heterodimer composed of CysD, the smaller subunit, and CysN.

It carries out the reaction sulfate + ATP + H(+) = adenosine 5'-phosphosulfate + diphosphate. The protein operates within sulfur metabolism; hydrogen sulfide biosynthesis; sulfite from sulfate: step 1/3. Its function is as follows. With CysN forms the ATP sulfurylase (ATPS) that catalyzes the adenylation of sulfate producing adenosine 5'-phosphosulfate (APS) and diphosphate, the first enzymatic step in sulfur assimilation pathway. APS synthesis involves the formation of a high-energy phosphoric-sulfuric acid anhydride bond driven by GTP hydrolysis by CysN coupled to ATP hydrolysis by CysD. In Mycobacterium sp. (strain JLS), this protein is Sulfate adenylyltransferase subunit 2.